The sequence spans 237 residues: Orotidine 5'-phosphate decarboxylase (237 aa).

Residues aspartate 17, lysine 39, 66 to 75, threonine 121, arginine 182, glutamine 191, glycine 211, and arginine 212 each bind substrate; that span reads DLKLHDIGNT. Lysine 68 functions as the Proton donor in the catalytic mechanism.

Belongs to the OMP decarboxylase family. Type 1 subfamily. Homodimer.

The enzyme catalyses orotidine 5'-phosphate + H(+) = UMP + CO2. It functions in the pathway pyrimidine metabolism; UMP biosynthesis via de novo pathway; UMP from orotate: step 2/2. In terms of biological role, catalyzes the decarboxylation of orotidine 5'-monophosphate (OMP) to uridine 5'-monophosphate (UMP). This Rhodopseudomonas palustris (strain ATCC BAA-98 / CGA009) protein is Orotidine 5'-phosphate decarboxylase.